The chain runs to 323 residues: tRNA dimethylallyltransferase (323 aa).

Position 15–22 (15–22 (GATGSGKT)) interacts with ATP. Residue 17-22 (TGSGKT) participates in substrate binding. 2 interaction with substrate tRNA regions span residues 40-43 (DSRQ) and 164-168 (QRLIR).

This sequence belongs to the IPP transferase family. In terms of assembly, monomer. Mg(2+) is required as a cofactor.

The enzyme catalyses adenosine(37) in tRNA + dimethylallyl diphosphate = N(6)-dimethylallyladenosine(37) in tRNA + diphosphate. Functionally, catalyzes the transfer of a dimethylallyl group onto the adenine at position 37 in tRNAs that read codons beginning with uridine, leading to the formation of N6-(dimethylallyl)adenosine (i(6)A). This chain is tRNA dimethylallyltransferase, found in Chloroherpeton thalassium (strain ATCC 35110 / GB-78).